Consider the following 449-residue polypeptide: MAQTPPTSEARPRPPVPTLFRVALAPIQAFFRLEAASGILLALCAVAAMVWANSPWAATYSAVFDARMTVGLAGVHAGFTIREFINDGLMTLFFFVVGMEIKRELSSGELRTFSRAVLPLIAAMGGMIVPAALYAAFNQGTPAQAGWAIPMATDIAFSIGCLTLVKTRVSHGLVVFLTALAIFDDIGGILVIALFYGSGLHVSWLVGALGVLAVLACLNHFQVRNGVAYALAGAALWYTMHHGGIHATLSGVVLGLFMPARPLRPGRHVLEELRLYVDRALQTAMDEATRGAQILYLEERLEELEPPLNRFVHLWHVPVAYGIVPLFALANSGISLEGMGWADLLRPLPLGIIAGLFVGKQVGIFLFTWGSLKLGVADRPGGATLPQLHGVAVVAGIGFTVALFVAGLAFPTQPELLTEAKLGILVGSLLSAVVGYALLRFVAKPAVPA.

11 consecutive transmembrane segments (helical) span residues 38 to 58 (GILL…PWAA), 79 to 99 (FTIR…VVGM), 117 to 137 (VLPL…YAAF), 145 to 165 (AGWA…LTLV), 175 to 195 (VFLT…IALF), 198 to 218 (SGLH…LACL), 240 to 260 (MHHG…FMPA), 311 to 331 (FVHL…ALAN), 347 to 367 (PLPL…IFLF), 390 to 410 (GVAV…GLAF), and 422 to 442 (LGIL…LRFV).

Belongs to the NhaA Na(+)/H(+) (TC 2.A.33) antiporter family.

The protein resides in the cell inner membrane. It carries out the reaction Na(+)(in) + 2 H(+)(out) = Na(+)(out) + 2 H(+)(in). In terms of biological role, na(+)/H(+) antiporter that extrudes sodium in exchange for external protons. The sequence is that of Na(+)/H(+) antiporter NhaA 1 from Myxococcus xanthus (strain DK1622).